An 845-amino-acid polypeptide reads, in one-letter code: Tyrosine-protein phosphatase corkscrew (845 aa).

2 consecutive SH2 domains span residues 6 to 101 (WFHP…KQPL) and 111 to 205 (WFHG…RQPF). Residues 227–645 (FWEEFESLQQ…KFVYYAVQHY (419 aa)) form the Tyrosine-protein phosphatase domain. The segment at 289 to 444 (IRLPTDGDLY…REREREMFKT (156 aa)) is PTPase insert (Cys/Ser-rich). Residues 362–402 (SKHKRSESSASSSPSSGSGSGPGSSGTSGVSSVNGPGTPTN) form a disordered region. 2 stretches are compositionally biased toward low complexity: residues 369 to 378 (SSASSSPSSG) and 388 to 400 (TSGV…PGTP). Phosphoserine is present on Ser419. Substrate-binding positions include Asp545, 583–589 (CSAGIGR), and Gln630. Cys583 acts as the Phosphocysteine intermediate in catalysis. Residues 793 to 824 (DSLKQQQQREEQAPAGAGKMQQPAPPLRPRPG) are disordered.

The protein belongs to the protein-tyrosine phosphatase family. Non-receptor class subfamily. In terms of assembly, interacts with drpr isoform A. Expressed uniformly throughout all tissues during embryogenesis.

The protein resides in the cytoplasm. The enzyme catalyses O-phospho-L-tyrosyl-[protein] + H2O = L-tyrosyl-[protein] + phosphate. Functionally, required in all receptor tyrosine kinase signaling pathways. Functions downstream of the receptor tyrosine kinase torso, acting in concert with D-Raf via tailless. Also functions downstream of Egfr (epidermal growth factor receptor) and btl (fibroblast growth factor receptor). The SH2 domain suggests that csw effects its role by mediating heteromeric protein interactions. Maternally required for normal determination of cell fates at the termini of the embryo. Required for cell fate specification of the ventral ectoderm, in the developing embryonic CNS and for embryonic tracheal cell migration. Functions during imaginal development for proper formation of adult structures such as eyes, aristae, L5 wing vein and the tarsal claw. Dephosphorylates drpr isoform A which is required for the inhibition by drpr isoform A of glial cell engulfment of axonal debris produced following axonal injury. The sequence is that of Tyrosine-protein phosphatase corkscrew (csw) from Drosophila melanogaster (Fruit fly).